The chain runs to 320 residues: HPr kinase/phosphorylase (320 aa).

Active-site residues include His-141 and Lys-162. ATP is bound at residue 156–163 (GHSGLGKS). Residue Ser-163 participates in Mg(2+) binding. Asp-180 (proton acceptor; for phosphorylation activity. Proton donor; for dephosphorylation activity) is an active-site residue. The interval 204 to 213 (LEVRGLGILN) is important for the catalytic mechanism of both phosphorylation and dephosphorylation. Mg(2+) is bound at residue Glu-205. Arg-248 is a catalytic residue. The interval 269–274 (PVAVGR) is important for the catalytic mechanism of dephosphorylation.

It belongs to the HPrK/P family. In terms of assembly, homohexamer. It depends on Mg(2+) as a cofactor.

The catalysed reaction is [HPr protein]-L-serine + ATP = [HPr protein]-O-phospho-L-serine + ADP + H(+). The enzyme catalyses [HPr protein]-O-phospho-L-serine + phosphate + H(+) = [HPr protein]-L-serine + diphosphate. Functionally, catalyzes the ATP- as well as the pyrophosphate-dependent phosphorylation of a specific serine residue in HPr, a phosphocarrier protein of the phosphoenolpyruvate-dependent sugar phosphotransferase system (PTS). HprK/P also catalyzes the pyrophosphate-producing, inorganic phosphate-dependent dephosphorylation (phosphorolysis) of seryl-phosphorylated HPr (P-Ser-HPr). In Neisseria gonorrhoeae (strain ATCC 700825 / FA 1090), this protein is HPr kinase/phosphorylase.